We begin with the raw amino-acid sequence, 396 residues long: LIM/homeobox protein Lhx9 (396 aa).

LIM zinc-binding domains lie at 69–130 and 131–193; these read ALCA…RFSV and QRCA…LIQG. Disordered regions lie at residues 248–272, 328–365, and 377–396; these read ENDA…RMRT, RQEN…TDLT, and SSLD…TNLF. Positions 267 to 326 form a DNA-binding region, homeobox; it reads TKRMRTSFKHHQLRTMKSYFAINHNPDAKDLKQLAQKTGLTKRVLQVWFQNARAKFRRNV. A compositionally biased stretch (low complexity) spans 352–365; sequence LTPPSTATTLTDLT. The span at 384 to 396 shows a compositional bias: polar residues; sequence SGSPPQTTLTNLF.

The protein resides in the nucleus. In terms of biological role, may be involved in gonadal development. The polypeptide is LIM/homeobox protein Lhx9 (lhx9) (Danio rerio (Zebrafish)).